An 87-amino-acid chain; its full sequence is NADH dehydrogenase [ubiquinone] 1 alpha subcomplex subunit 4-like 2 (87 aa).

Belongs to the complex I NDUFA4 subunit family.

The protein is NADH dehydrogenase [ubiquinone] 1 alpha subcomplex subunit 4-like 2 (NDUFA4L2) of Homo sapiens (Human).